A 475-amino-acid polypeptide reads, in one-letter code: Ankyrin repeat, SAM and basic leucine zipper domain-containing protein 1 (475 aa).

Positions 1 to 24 are disordered; the sequence is MAASALRGPPVAGGGESSESEDDG. A phosphoserine mark is found at serine 17, serine 18, and serine 20. ANK repeat units follow at residues 45–74, 78–107, 110–144, 148–177, 181–210, and 214–243; these read EKKE…SVDS, YGWT…NASF, DKQS…DPNV, RLMT…EVNT, NGYT…NKML, and DGKM…PLEG. Residues 272–334 form the SAM domain; sequence SYTAFGDLEV…KILAALKELQ (63 aa).

In terms of assembly, interacts with DDX4, PIWIL1, RANBP9 and TDRD1.

Its subcellular location is the cytoplasm. Its function is as follows. Plays a central role during spermatogenesis by repressing transposable elements and preventing their mobilization, which is essential for the germline integrity. Acts via the piRNA metabolic process, which mediates the repression of transposable elements during meiosis by forming complexes composed of piRNAs and Piwi proteins and governs the methylation and subsequent repression of transposons. Its association with pi-bodies suggests a participation in the primary piRNAs metabolic process. Required prior to the pachytene stage to facilitate the production of multiple types of piRNAs, including those associated with repeats involved in the regulation of retrotransposons. May act by mediating protein-protein interactions during germ cell maturation. The protein is Ankyrin repeat, SAM and basic leucine zipper domain-containing protein 1 (ASZ1) of Gorilla gorilla gorilla (Western lowland gorilla).